The following is a 276-amino-acid chain: uncharacterized protein (276 aa).

10 helical membrane-spanning segments follow: residues isoleucine 5–valine 25, isoleucine 31–leucine 51, valine 63–valine 83, valine 89–leucine 109, valine 119–isoleucine 139, isoleucine 142–leucine 162, proline 168–proline 188, leucine 200–tyrosine 220, alanine 231–alanine 251, and proline 253–valine 273. EamA domains lie at threonine 12–glutamate 133 and valine 150–arginine 274.

It belongs to the EamA transporter family.

The protein resides in the cell membrane. This is an uncharacterized protein from Archaeoglobus fulgidus (strain ATCC 49558 / DSM 4304 / JCM 9628 / NBRC 100126 / VC-16).